The chain runs to 193 residues: Xanthine phosphoribosyltransferase (193 aa).

Residues Leu20 and Thr27 each contribute to the xanthine site. Residue 128–132 (ANGQA) coordinates 5-phospho-alpha-D-ribose 1-diphosphate. Position 156 (Lys156) interacts with xanthine.

The protein belongs to the purine/pyrimidine phosphoribosyltransferase family. Xpt subfamily. Homodimer.

The protein resides in the cytoplasm. It carries out the reaction XMP + diphosphate = xanthine + 5-phospho-alpha-D-ribose 1-diphosphate. The protein operates within purine metabolism; XMP biosynthesis via salvage pathway; XMP from xanthine: step 1/1. Functionally, converts the preformed base xanthine, a product of nucleic acid breakdown, to xanthosine 5'-monophosphate (XMP), so it can be reused for RNA or DNA synthesis. The protein is Xanthine phosphoribosyltransferase of Streptococcus pyogenes serotype M49 (strain NZ131).